The following is a 669-amino-acid chain: DNA mismatch repair protein MutL (669 aa).

Residues 356–382 (FEQRQNTENNQEKTFSSEESNSKPFME) are disordered. The segment covering 361 to 378 (NTENNQEKTFSSEESNSK) has biased composition (polar residues).

The protein belongs to the DNA mismatch repair MutL/HexB family.

Functionally, this protein is involved in the repair of mismatches in DNA. It is required for dam-dependent methyl-directed DNA mismatch repair. May act as a 'molecular matchmaker', a protein that promotes the formation of a stable complex between two or more DNA-binding proteins in an ATP-dependent manner without itself being part of a final effector complex. The polypeptide is DNA mismatch repair protein MutL (Staphylococcus aureus (strain USA300)).